The chain runs to 392 residues: ERBB-3 BINDING PROTEIN 1 (392 aa).

2 necessary for nucleolar localization regions span residues 1 to 50 (MSSD…IVDI) and 298 to 392 (HLQP…NAQE). The RNA-binding stretch occupies residues 48-56 (VDICEKGDS). Positions 355-372 (GIKKKKGGGKKKKAQKAG) are interaction with RNA. Positions 357-367 (KKKKGGGKKKK) match the Nuclear localization signal motif. Residues 358 to 369 (KKKGGGKKKKAQ) are compositionally biased toward basic residues. The tract at residues 358–392 (KKKGGGKKKKAQKAGEKGEASTEAEPMDASSNAQE) is disordered.

The protein belongs to the peptidase M24 family. As to quaternary structure, component of a ribonucleoprotein complex. Interacts with REIL1 and REIL2. As to expression, strongly expressed in calls, roots and flowers, to a lower extent, in stems and siliques, but hardly detectable in leaves.

It is found in the nucleus. Functionally, binds RNA. Associates with 28S, 18S and 5.8S mature rRNAs, several rRNA precursors and probably U3 small nucleolar RNA. May be involved in regulation of intermediate and late steps of rRNA processing. May be involved in ribosome assembly. Required for expression of cell cycle genes such as CYCD3-1, RNR2A and CDKB1-1. Promotes, in a dose- and auxin-dependent manner, organ growth by stimulating both cell proliferation and expansion, via the regulation of RBR1 levels. The sequence is that of ERBB-3 BINDING PROTEIN 1 from Arabidopsis thaliana (Mouse-ear cress).